Here is a 253-residue protein sequence, read N- to C-terminus: Indole-3-glycerol phosphate synthase (253 aa).

Belongs to the TrpC family.

The catalysed reaction is 1-(2-carboxyphenylamino)-1-deoxy-D-ribulose 5-phosphate + H(+) = (1S,2R)-1-C-(indol-3-yl)glycerol 3-phosphate + CO2 + H2O. It functions in the pathway amino-acid biosynthesis; L-tryptophan biosynthesis; L-tryptophan from chorismate: step 4/5. The polypeptide is Indole-3-glycerol phosphate synthase (Bacillus cereus (strain AH187)).